The following is a 37-amino-acid chain: Diuretic hormone 1 (37 aa).

It belongs to the sauvagine/corticotropin-releasing factor/urotensin I family.

The protein localises to the secreted. Stimulates fluid secretion by the Malpighian tubules. Increases cyclic AMP production. In Tenebrio molitor (Yellow mealworm beetle), this protein is Diuretic hormone 1.